The chain runs to 558 residues: Galactoside 2-alpha-L-fucosyltransferase (558 aa).

Over 1–43 (MDQNSYRRRSSPIRTTTGGSKSVNFSELLQMKYLSSGTMKLTR) the chain is Cytoplasmic. The chain crosses the membrane as a helical; Signal-anchor for type II membrane protein span at residues 44 to 64 (TFTTCLIVFSVLVAFSMIFHQ). At 65 to 558 (HPSDSNRIMG…EDISWGLKLV (494 aa)) the chain is on the lumenal side. N-linked (GlcNAc...) asparagine glycosylation is found at Asn88 and Asn504.

It belongs to the glycosyltransferase 37 family. In terms of assembly, homodimer. Interacts with MUR3, XLT2, XXT2 and XXT5. In terms of tissue distribution, expressed in roots, stems, leaves, flowers, siliques and seedlings.

It localises to the golgi apparatus. Its subcellular location is the golgi stack membrane. It is found in the golgi apparatus membrane. Functionally, involved in cell wall biosynthesis. Is both necessary and sufficient for the addition of the terminal fucosyl residue on xyloglucan side chains, but is not involved in the fucosylation of other cell wall components. Associates with other xyloglucan-synthesizing enzymes to form multiprotein complexes for xyloglucan synthesis in the Golgi. This is Galactoside 2-alpha-L-fucosyltransferase (FUT1) from Arabidopsis thaliana (Mouse-ear cress).